A 386-amino-acid polypeptide reads, in one-letter code: MAVNLLKTQQFSTISIAASFLKPIESAAEPEEETIYFYSAAAHLKQQIIDAFGYAAGCRFMYSANLFFDQQLKTCGTRLIHPSFNKNLHLDALMKTFADMSFPSSLSADAVEKAKDELLLKIEKKFADPFSYSAARLAEEAFGNPMYGTAMFGRKDRIQAIHPQRFLNATDFIVDLLSQHKQLNILGHVQACDIPGHASQTSAVTAGRFLVNRHVFETETRSAAGPSVLTLGFDCGEMKDASDYIKIQLIDGLLGKYGHSALFKHFREKDLAVYHVITRYDIMNNLLLVSICTNQLHEKEIPPRVLEAVSHFSADERELEQAKQFFRNEMLLQFDSPEGLLAYMGILRRFSCTKEDLLDGISAVTCRDVLQFITTINYIGAHVVRG.

Involved in the production of the bacteriocin subtilosin. The chain is Antilisterial bacteriocin subtilosin biosynthesis protein AlbE (albE) from Bacillus subtilis.